The following is a 259-amino-acid chain: 1-(5-phosphoribosyl)-5-[(5-phosphoribosylamino)methylideneamino] imidazole-4-carboxamide isomerase (259 aa).

The Proton acceptor role is filled by Asp8. Asp129 functions as the Proton donor in the catalytic mechanism.

This sequence belongs to the HisA/HisF family.

The protein localises to the cytoplasm. The catalysed reaction is 1-(5-phospho-beta-D-ribosyl)-5-[(5-phospho-beta-D-ribosylamino)methylideneamino]imidazole-4-carboxamide = 5-[(5-phospho-1-deoxy-D-ribulos-1-ylimino)methylamino]-1-(5-phospho-beta-D-ribosyl)imidazole-4-carboxamide. It participates in amino-acid biosynthesis; L-histidine biosynthesis; L-histidine from 5-phospho-alpha-D-ribose 1-diphosphate: step 4/9. This chain is 1-(5-phosphoribosyl)-5-[(5-phosphoribosylamino)methylideneamino] imidazole-4-carboxamide isomerase, found in Pelotomaculum thermopropionicum (strain DSM 13744 / JCM 10971 / SI).